A 462-amino-acid polypeptide reads, in one-letter code: MAVSLWQQCIGRLQDELSAQQFSMWIRPLQAEMDGDTLVLYAPNRFVLDWVRDKYINIINQFFTEQMGSDAPKLRFDIGSRPSAKKPSVPAPIAPTRVANTQTKATVGTTFNVQAEPMANANHRSNINPSYQFDNFVEGKSNQLGKAAALQVAENPGGAYNPLFLYGGTGLGKTHLLHAVGNGIIKNNPNAKVVYMHSERFVQDMVKALQNNAIEEFKRYYRSVDALFIDDIQFFANKDRSQEEFFHTFNALLEGNHQIILTSDRYPKEIDGVEDRLKSRFGWGLTVAIEPPELETRVAILMRKAQESGINLPDEVAFFIAKRLRSNVRELEGALNRVIANANFTGRPITIDFVREALRDLLALQEKLVTIDNIQKTVAEYYKIKMADMLSKRRSRSVARPRQVAMALSKELTNQSLPEIGDAFGGRDHTTVLHACRKIAQLREESHDIKEDYANLIRTLSS.

Residues 1–84 (MAVSLWQQCI…RFDIGSRPSA (84 aa)) form a domain I, interacts with DnaA modulators region. The domain II stretch occupies residues 84-125 (AKKPSVPAPIAPTRVANTQTKATVGTTFNVQAEPMANANHRS). The interval 126-342 (NINPSYQFDN…GALNRVIANA (217 aa)) is domain III, AAA+ region. Residues Gly-170, Gly-172, Lys-173, and Thr-174 each contribute to the ATP site. Residues 343–462 (NFTGRPITID…YANLIRTLSS (120 aa)) form a domain IV, binds dsDNA region.

Belongs to the DnaA family. Oligomerizes as a right-handed, spiral filament on DNA at oriC.

The protein localises to the cytoplasm. Its function is as follows. Plays an essential role in the initiation and regulation of chromosomal replication. ATP-DnaA binds to the origin of replication (oriC) to initiate formation of the DNA replication initiation complex once per cell cycle. Binds the DnaA box (a 9 base pair repeat at the origin) and separates the double-stranded (ds)DNA. Forms a right-handed helical filament on oriC DNA; dsDNA binds to the exterior of the filament while single-stranded (ss)DNA is stabiized in the filament's interior. The ATP-DnaA-oriC complex binds and stabilizes one strand of the AT-rich DNA unwinding element (DUE), permitting loading of DNA polymerase. After initiation quickly degrades to an ADP-DnaA complex that is not apt for DNA replication. Binds acidic phospholipids. The protein is Chromosomal replication initiator protein DnaA of Shewanella baltica (strain OS195).